Consider the following 150-residue polypeptide: Dihydroneopterin triphosphate diphosphatase (150 aa).

The 142-residue stretch at 5 to 146 (VYKRPVSILV…SNRQAIEQFV (142 aa)) folds into the Nudix hydrolase domain. Substrate contacts are provided by lysine 7, arginine 29, and threonine 40. The short motif at 41–62 (GSVEEGETAPQAAMREVKEEVT) is the Nudix box element. The Mg(2+) site is built by glutamate 56 and glutamate 60. 81-84 (FEIF) lines the substrate pocket. Glutamate 117 contributes to the Mg(2+) binding site. Serine 135 lines the substrate pocket.

The protein belongs to the Nudix hydrolase family. Mg(2+) serves as cofactor.

The enzyme catalyses 7,8-dihydroneopterin 3'-triphosphate + H2O = 7,8-dihydroneopterin 3'-phosphate + diphosphate + H(+). Catalyzes the hydrolysis of dihydroneopterin triphosphate to dihydroneopterin monophosphate and pyrophosphate. Required for efficient folate biosynthesis. Can also hydrolyze nucleoside triphosphates with a preference for dATP. In Escherichia coli O157:H7, this protein is Dihydroneopterin triphosphate diphosphatase (nudB).